We begin with the raw amino-acid sequence, 202 residues long: Recombination protein RecR (202 aa).

Residues 61-76 (CARCNSFTEDDICATC) form a C4-type zinc finger. The Toprim domain maps to 84 to 179 (SVLCVVETPA…KVTRLARGVP (96 aa)).

The protein belongs to the RecR family.

May play a role in DNA repair. It seems to be involved in an RecBC-independent recombinational process of DNA repair. It may act with RecF and RecO. This Bordetella petrii (strain ATCC BAA-461 / DSM 12804 / CCUG 43448) protein is Recombination protein RecR.